The sequence spans 404 residues: XK-related protein 8 (404 aa).

8 consecutive transmembrane segments (helical) span residues 14 to 34 (FVFSVIGACTFLVDWGSDVWL), 44 to 64 (VTWFWVLVGLMALSSFVVQTF), 169 to 189 (AVQFVSIAASTTSIAWMVVDY), 209 to 229 (LIYFLWNLLLIAPRVAALALC), 232 to 252 (VLSGYMAAHFLMLWSAFALWA), 262 to 282 (SVAGEWLYRATVGLIWYFSWF), 293 to 313 (SAIYHSFISTDGAILLATWWC), and 324 to 344 (ALALLIALPLFHFLGLLFKAL).

It belongs to the XK family.

The protein resides in the cell membrane. The enzyme catalyses a 1,2-diacyl-sn-glycero-3-phospho-L-serine(in) = a 1,2-diacyl-sn-glycero-3-phospho-L-serine(out). Its function is as follows. Phospholipid scramblase that promotes phosphatidylserine exposure on apoptotic cell surface, possibly by mediating phospholipid scrambling. Phosphatidylserine is a specific marker only present at the surface of apoptotic cells and acts as a specific signal for engulfment. The polypeptide is XK-related protein 8 (Gasterosteus aculeatus (Three-spined stickleback)).